The sequence spans 611 residues: Large ribosomal subunit assembly factor BipA (611 aa).

One can recognise a tr-type G domain in the interval 7–202 (KNLRNIAIIA…AIVKYTPPPT (196 aa)). Residues 19–24 (DHGKTT) and 132–135 (NKID) contribute to the GTP site.

The protein belongs to the TRAFAC class translation factor GTPase superfamily. Classic translation factor GTPase family. BipA subfamily. In terms of assembly, monomer.

It is found in the cytoplasm. The catalysed reaction is GTP + H2O = GDP + phosphate + H(+). A 50S ribosomal subunit assembly protein with GTPase activity, required for 50S subunit assembly at low temperatures, may also play a role in translation. Binds GTP and analogs. Binds the 70S ribosome between the 30S and 50S subunits, in a similar position as ribosome-bound EF-G; it contacts a number of ribosomal proteins, both rRNAs and the A-site tRNA. The protein is Large ribosomal subunit assembly factor BipA of Buchnera aphidicola subsp. Baizongia pistaciae (strain Bp).